The sequence spans 420 residues: Gamma-glutamyl phosphate reductase (420 aa).

It belongs to the gamma-glutamyl phosphate reductase family.

The protein localises to the cytoplasm. It catalyses the reaction L-glutamate 5-semialdehyde + phosphate + NADP(+) = L-glutamyl 5-phosphate + NADPH + H(+). Its pathway is amino-acid biosynthesis; L-proline biosynthesis; L-glutamate 5-semialdehyde from L-glutamate: step 2/2. Functionally, catalyzes the NADPH-dependent reduction of L-glutamate 5-phosphate into L-glutamate 5-semialdehyde and phosphate. The product spontaneously undergoes cyclization to form 1-pyrroline-5-carboxylate. The sequence is that of Gamma-glutamyl phosphate reductase from Streptococcus pneumoniae serotype 19F (strain G54).